A 719-amino-acid polypeptide reads, in one-letter code: Transcription factor E4F1 (719 aa).

The interval 20–63 is required for ubiquitin ligase activity; that stretch reads NIITIQTTLGDEDEDIHKCGKCLAEFSALDAFIQHKLSRSCKRT. The disordered stretch occupies residues 59-125; the sequence is SCKRTQDPQT…SEDESSSPSK (67 aa). Residues 98–109 are compositionally biased toward basic and acidic residues; the sequence is EKQDAKVASGDK. Residues 128–207 are mediates dimerization and DNA-binding; sequence WKLNTEGRYV…GLAFRESGAL (80 aa). 2 C2H2-type zinc fingers span residues 136 to 158 and 164 to 186; these read YVCD…MFTH and FVCE…KRRH. A C2H2-type 3; degenerate zinc finger spans residues 192–216; sequence YRCNQCGLAFRESGALTRHLKSLTP. 5 C2H2-type zinc fingers span residues 365-387, 393-415, 421-443, 449-471, and 477-499; these read YKCP…VKGH, FKCL…METH, YKCG…MRAH, YHCS…HRTH, and YVCQ…IRHH. The C2H2-type 9; degenerate zinc finger occupies 505–527; that stretch reads FKCSKCGRGFAEHGTLNRHLRAK.

It is found in the nucleus. The protein resides in the nucleoplasm. The protein localises to the cytoplasm. The enzyme catalyses S-ubiquitinyl-[E2 ubiquitin-conjugating enzyme]-L-cysteine + [acceptor protein]-L-lysine = [E2 ubiquitin-conjugating enzyme]-L-cysteine + N(6)-ubiquitinyl-[acceptor protein]-L-lysine.. It participates in protein modification; protein ubiquitination. In terms of biological role, may function as a transcriptional repressor. May also function as a ubiquitin ligase. Functions in cell survival and proliferation through control of the cell cycle. The polypeptide is Transcription factor E4F1 (e4f1) (Danio rerio (Zebrafish)).